The primary structure comprises 598 residues: Peroxisomal multifunctional enzyme type 2 (598 aa).

A (3R)-hydroxyacyl-CoA dehydrogenase region spans residues 1 to 309 (MSSSDGKLRY…LEVLEKLKEG (309 aa)). Residues 16–40 (VVTGAGAGLGREYALLFAERGAKVV), Leu24, Asp43, 78–79 (SV), and Asn102 each bind NAD(+). Position 154 (Ser154) interacts with substrate. The Proton acceptor role is filled by Tyr167. Residues 167 to 171 (YTAAK) and 199 to 202 (AASR) each bind NAD(+). Residues 310-598 (GGDAIEDAFE…VDLKSSQAKL (289 aa)) are enoyl-CoA hydratase 2. (3R)-3-hydroxydecanoyl-CoA is bound by residues 390-391 (HG), Lys419, 496-501 (DKNPLH), Gly519, and Phe549. A MaoC-like domain is found at 469-586 (PAPNRQPDAT…VETGKEVISG (118 aa)). The Microbody targeting signal motif lies at 596 to 598 (AKL).

The protein belongs to the short-chain dehydrogenases/reductases (SDR) family. In terms of assembly, homodimer.

It is found in the peroxisome. The catalysed reaction is a (3R)-3-hydroxyacyl-CoA + NAD(+) = a 3-oxoacyl-CoA + NADH + H(+). It carries out the reaction a (3R)-3-hydroxyacyl-CoA = a (2E)-enoyl-CoA + H2O. It participates in lipid metabolism; fatty acid beta-oxidation. Its function is as follows. Bifunctional enzyme acting on the peroxisomal beta-oxidation pathway for fatty acids. The protein is Peroxisomal multifunctional enzyme type 2 of Drosophila melanogaster (Fruit fly).